We begin with the raw amino-acid sequence, 365 residues long: Fructose-1,6-bisphosphatase class 1 2 (365 aa).

Residues glutamate 100, aspartate 122, leucine 124, and aspartate 125 each coordinate Mg(2+). Substrate contacts are provided by residues 125–128 (DGSS) and asparagine 221. Residue glutamate 293 participates in Mg(2+) binding.

The protein belongs to the FBPase class 1 family. In terms of assembly, homotetramer. Mg(2+) serves as cofactor.

It is found in the cytoplasm. The enzyme catalyses beta-D-fructose 1,6-bisphosphate + H2O = beta-D-fructose 6-phosphate + phosphate. Its pathway is carbohydrate biosynthesis; gluconeogenesis. The protein is Fructose-1,6-bisphosphatase class 1 2 of Leptothrix cholodnii (strain ATCC 51168 / LMG 8142 / SP-6) (Leptothrix discophora (strain SP-6)).